A 272-amino-acid chain; its full sequence is Acyl-[acyl-carrier-protein]--UDP-N-acetylglucosamine O-acyltransferase (272 aa).

Belongs to the transferase hexapeptide repeat family. LpxA subfamily. In terms of assembly, homotrimer.

It is found in the cytoplasm. The enzyme catalyses a (3R)-hydroxyacyl-[ACP] + UDP-N-acetyl-alpha-D-glucosamine = a UDP-3-O-[(3R)-3-hydroxyacyl]-N-acetyl-alpha-D-glucosamine + holo-[ACP]. It functions in the pathway glycolipid biosynthesis; lipid IV(A) biosynthesis; lipid IV(A) from (3R)-3-hydroxytetradecanoyl-[acyl-carrier-protein] and UDP-N-acetyl-alpha-D-glucosamine: step 1/6. Its function is as follows. Involved in the biosynthesis of lipid A, a phosphorylated glycolipid that anchors the lipopolysaccharide to the outer membrane of the cell. This chain is Acyl-[acyl-carrier-protein]--UDP-N-acetylglucosamine O-acyltransferase, found in Methylobacterium radiotolerans (strain ATCC 27329 / DSM 1819 / JCM 2831 / NBRC 15690 / NCIMB 10815 / 0-1).